A 79-amino-acid polypeptide reads, in one-letter code: Small ribosomal subunit protein bS18 (79 aa).

The protein belongs to the bacterial ribosomal protein bS18 family. In terms of assembly, part of the 30S ribosomal subunit. Forms a tight heterodimer with protein bS6.

In terms of biological role, binds as a heterodimer with protein bS6 to the central domain of the 16S rRNA, where it helps stabilize the platform of the 30S subunit. This chain is Small ribosomal subunit protein bS18, found in Streptococcus agalactiae serotype Ia (strain ATCC 27591 / A909 / CDC SS700).